We begin with the raw amino-acid sequence, 394 residues long: Isopentenyl-diphosphate delta-isomerase (394 aa).

10–11 (RK) provides a ligand contact to substrate. Residues threonine 67, 68–70 (GMT), serine 101, and asparagine 129 contribute to the FMN site. Position 101–103 (101–103 (SQR)) interacts with substrate. A substrate-binding site is contributed by glutamine 168. Glutamate 169 serves as a coordination point for Mg(2+). Residues lysine 200, serine 225, threonine 230, 279 to 281 (GMR), and 300 to 301 (AL) contribute to the FMN site.

It belongs to the IPP isomerase type 2 family. In terms of assembly, homooctamer. Dimer of tetramers. It depends on FMN as a cofactor. The cofactor is NADPH. Mg(2+) is required as a cofactor.

It localises to the cytoplasm. The enzyme catalyses isopentenyl diphosphate = dimethylallyl diphosphate. Its function is as follows. Involved in the biosynthesis of isoprenoids. Catalyzes the 1,3-allylic rearrangement of the homoallylic substrate isopentenyl (IPP) to its allylic isomer, dimethylallyl diphosphate (DMAPP). This is Isopentenyl-diphosphate delta-isomerase from Pyrococcus furiosus (strain ATCC 43587 / DSM 3638 / JCM 8422 / Vc1).